A 388-amino-acid chain; its full sequence is Staphopain A (388 aa).

The signal sequence occupies residues 1-25 (MKRNFPKLIALSLILSLSVTPIANA). The propeptide occupies 26–214 (ESNSNIKAKD…TSQFKSNNYT (189 aa)). Active-site residues include C238, H334, and N355.

This sequence belongs to the peptidase C47 family. In terms of assembly, in the cytoplasm, prematurely activated/folded ScpA forms a stable non-covalent complex with ScpB. In terms of processing, cleavage leads to the activation of ScpA probably by an auto-catalytic manner.

It is found in the secreted. It catalyses the reaction Broad endopeptidase action on proteins including elastin, but rather limited hydrolysis of small-molecule substrates. Assays are conveniently made with hemoglobin, casein or Z-Phe-Arg-NHMec as substrate.. Prematurely activated/folded staphopain A is inhibited by staphostatin A (ScpB), which is probably required to protect staphylococcal cytoplasmic proteins from degradation by ScpA. Functionally, cysteine protease that plays an important role in the inhibition of host innate immune response. Cleaves host elastins found in connective tissues, pulmonary surfactant protein A in the lungs, and the chemokine receptor CXCR2 on leukocytes. Proteolytic cleavage of surfactant protein A impairs bacterial phagocytosis by neutrophils while CXCR2 degradation blocks neutrophil activation and chemotaxis. Additionally, promotes vascular leakage by activating the plasma kallikerin/kinin system, resulting in hypotension. The chain is Staphopain A (sspP) from Staphylococcus aureus (strain MSSA476).